Here is a 542-residue protein sequence, read N- to C-terminus: CTP synthase (542 aa).

An amidoligase domain region spans residues 1 to 265 (MTRYVFITGG…DREILAHFQM (265 aa)). CTP is bound at residue Ser-13. Ser-13 is a UTP binding site. Residues 14–19 (SLGKGL) and Asp-71 contribute to the ATP site. Positions 71 and 139 each coordinate Mg(2+). CTP-binding positions include 146–148 (DIE), 186–191 (KTKPTQ), and Lys-222. UTP is bound by residues 186-191 (KTKPTQ) and Lys-222. 238-240 (RDV) contacts ATP. Residues 291–541 (TIAIVGKYTG…IAAAIDQSRL (251 aa)) enclose the Glutamine amidotransferase type-1 domain. An L-glutamine-binding site is contributed by Gly-353. Cys-380 acts as the Nucleophile; for glutamine hydrolysis in catalysis. L-glutamine-binding positions include 381-384 (FGMQ), Glu-404, and Arg-469. Residues His-514 and Glu-516 contribute to the active site.

Belongs to the CTP synthase family. As to quaternary structure, homotetramer.

It catalyses the reaction UTP + L-glutamine + ATP + H2O = CTP + L-glutamate + ADP + phosphate + 2 H(+). The catalysed reaction is L-glutamine + H2O = L-glutamate + NH4(+). It carries out the reaction UTP + NH4(+) + ATP = CTP + ADP + phosphate + 2 H(+). It functions in the pathway pyrimidine metabolism; CTP biosynthesis via de novo pathway; CTP from UDP: step 2/2. Its activity is regulated as follows. Allosterically activated by GTP, when glutamine is the substrate; GTP has no effect on the reaction when ammonia is the substrate. The allosteric effector GTP functions by stabilizing the protein conformation that binds the tetrahedral intermediate(s) formed during glutamine hydrolysis. Inhibited by the product CTP, via allosteric rather than competitive inhibition. Its function is as follows. Catalyzes the ATP-dependent amination of UTP to CTP with either L-glutamine or ammonia as the source of nitrogen. Regulates intracellular CTP levels through interactions with the four ribonucleotide triphosphates. This is CTP synthase from Methylorubrum extorquens (strain CM4 / NCIMB 13688) (Methylobacterium extorquens).